We begin with the raw amino-acid sequence, 95 residues long: Aspartyl/glutamyl-tRNA(Asn/Gln) amidotransferase subunit C (95 aa).

It belongs to the GatC family. As to quaternary structure, heterotrimer of A, B and C subunits.

The enzyme catalyses L-glutamyl-tRNA(Gln) + L-glutamine + ATP + H2O = L-glutaminyl-tRNA(Gln) + L-glutamate + ADP + phosphate + H(+). It carries out the reaction L-aspartyl-tRNA(Asn) + L-glutamine + ATP + H2O = L-asparaginyl-tRNA(Asn) + L-glutamate + ADP + phosphate + 2 H(+). In terms of biological role, allows the formation of correctly charged Asn-tRNA(Asn) or Gln-tRNA(Gln) through the transamidation of misacylated Asp-tRNA(Asn) or Glu-tRNA(Gln) in organisms which lack either or both of asparaginyl-tRNA or glutaminyl-tRNA synthetases. The reaction takes place in the presence of glutamine and ATP through an activated phospho-Asp-tRNA(Asn) or phospho-Glu-tRNA(Gln). This is Aspartyl/glutamyl-tRNA(Asn/Gln) amidotransferase subunit C from Nitratidesulfovibrio vulgaris (strain DSM 19637 / Miyazaki F) (Desulfovibrio vulgaris).